Reading from the N-terminus, the 348-residue chain is Hereditary hemochromatosis protein homolog (348 aa).

The signal sequence occupies residues 1 to 22 (MGPRARPALFFLILLRTVAAQG). The tract at residues 23–114 (RPPRSHSLRY…IMDNHNHSKE (92 aa)) is alpha-1. Residues 23-306 (RPPRSHSLRY…WEPSLSNTLV (284 aa)) lie on the Extracellular side of the membrane. N-linked (GlcNAc...) asparagine glycosylation is found at asparagine 110, asparagine 130, and asparagine 234. Residues 115 to 205 (SHTLQVILGC…ELGRGVLDQQ (91 aa)) form an alpha-2 region. 2 cysteine pairs are disulfide-bonded: cysteine 124/cysteine 187 and cysteine 225/cysteine 282. The interval 206-297 (VPPLVKVTHH…GLDQPLTATW (92 aa)) is alpha-3. One can recognise an Ig-like C1-type domain in the interval 207–296 (PPLVKVTHHV…PGLDQPLTAT (90 aa)). The connecting peptide stretch occupies residues 298-306 (EPSLSNTLV). The chain crosses the membrane as a helical span at residues 307 to 330 (TGVISGIAVCVIIFLIGILFRILR). The Cytoplasmic portion of the chain corresponds to 331–348 (KRQASRGAMGDYVLAECE).

Belongs to the MHC class I family. Binds TFR through the extracellular domain in a pH-dependent manner.

Its subcellular location is the cell membrane. In terms of biological role, binds to transferrin receptor (TFR) and reduces its affinity for iron-loaded transferrin. The polypeptide is Hereditary hemochromatosis protein homolog (HFE) (Rhinoceros unicornis (Greater Indian rhinoceros)).